The following is a 530-amino-acid chain: Protein SLOW WALKER 1 (530 aa).

WD repeat units lie at residues 50–89 (NLVS…SSRR), 91–130 (SFRD…ALRT), 133–173 (SHSA…VISD), 176–216 (GHKD…SNWI), 220–258 (NHGL…KMVC), 262–304 (SHNK…VTYS), and 320–363 (GSTR…DESR). Positions 392–399 (EKKGLKLT) match the Nuclear localization signal motif.

In terms of tissue distribution, expressed in cells undergoing active cell divisions, including functional megaspores and the female gametophytic cells. Accumulates in roots, stems, leaves, inflorescences and siliques.

It localises to the nucleus. It is found in the nucleolus. Its function is as follows. Essential protein required for nuclear division and organization during embryo sac development in female gametophyte, probably by promoting rRNA biogenesis essential for the progression of the mitotic division cycles during gametogenesis. Involved in nucleolar processing of pre-18S ribosomal RNA. The protein is Protein SLOW WALKER 1 of Arabidopsis thaliana (Mouse-ear cress).